We begin with the raw amino-acid sequence, 219 residues long: uncharacterized protein (219 aa).

5 helical membrane-spanning segments follow: residues 14–34, 37–57, 123–143, 155–175, and 189–209; these read LVYS…FGVL, TLGF…AGAS, FLLG…ALGV, VYSA…LPNL, and VALA…AALA.

The protein belongs to the AzlC family.

The protein localises to the cell membrane. This is an uncharacterized protein from Archaeoglobus fulgidus (strain ATCC 49558 / DSM 4304 / JCM 9628 / NBRC 100126 / VC-16).